A 476-amino-acid chain; its full sequence is MSPQTETKASVGFKAGVKDYKLTYYTPDYETKDTDILAAFRVTPQPGVPPEEAGAAVAAESSTGTWTTVWTDGLTSLDRYKGRCYHIEPVAGEENQFIAYVAYPLDLFEEGSVTNMFTSIVGNVFGFKALRALRLEDLRIPTAYIKTFQGPPHGIQVERDKLNKYGRPLLGCTIKPKLGLSAKNYGRAVYECLRGGLDFTKDDENVNSQPFMRWRDRFLFCAEAIYKAQAETGEIKGHYLNATAGTCEEMIKRAVFARELGVPIVMHDYLTGGFTANTSLAHYCRDNGLLLHIHRAMHAVIDRQKNHGMHFRVLAKALRLSGGDHVHSGTVVGKLEGEREITLGFVDLLRDDFIEKDRSRGIYFTQDWVSLPGVLPVASGGIHVWHMPALTEIFGDDSVLQFGGGTLGHPWGNAPGAVANRVALEACVQARNEGRDLAREGNEIIREASKWSPELAAACEVWKEIKFEFEAMDTLD.

Positions 1–2 (MS) are excised as a propeptide. N-acetylproline is present on proline 3. Lysine 14 carries the post-translational modification N6,N6,N6-trimethyllysine. Substrate-binding residues include asparagine 123 and threonine 173. Catalysis depends on lysine 175, which acts as the Proton acceptor. Position 177 (lysine 177) interacts with substrate. The Mg(2+) site is built by lysine 201, aspartate 203, and glutamate 204. At lysine 201 the chain carries N6-carboxylysine. Catalysis depends on histidine 294, which acts as the Proton acceptor. Substrate is bound by residues arginine 295, histidine 327, and serine 379.

This sequence belongs to the RuBisCO large chain family. Type I subfamily. As to quaternary structure, heterohexadecamer of 8 large chains and 8 small chains; disulfide-linked. The disulfide link is formed within the large subunit homodimers. The cofactor is Mg(2+). In terms of processing, the disulfide bond which can form in the large chain dimeric partners within the hexadecamer appears to be associated with oxidative stress and protein turnover.

It localises to the plastid. Its subcellular location is the chloroplast. The catalysed reaction is 2 (2R)-3-phosphoglycerate + 2 H(+) = D-ribulose 1,5-bisphosphate + CO2 + H2O. It catalyses the reaction D-ribulose 1,5-bisphosphate + O2 = 2-phosphoglycolate + (2R)-3-phosphoglycerate + 2 H(+). In terms of biological role, ruBisCO catalyzes two reactions: the carboxylation of D-ribulose 1,5-bisphosphate, the primary event in carbon dioxide fixation, as well as the oxidative fragmentation of the pentose substrate in the photorespiration process. Both reactions occur simultaneously and in competition at the same active site. The polypeptide is Ribulose bisphosphate carboxylase large chain (Phaseolus vulgaris (Kidney bean)).